Consider the following 239-residue polypeptide: Ribosomal RNA large subunit methyltransferase E (239 aa).

Positions 1–20 are disordered; sequence MTKAPIAGNRTGRKLGQRVK. Positions 11–20 are enriched in basic residues; sequence TGRKLGQRVK. S-adenosyl-L-methionine-binding residues include G81, W83, D104, D120, and D144. Residue K184 is the Proton acceptor of the active site.

The protein belongs to the class I-like SAM-binding methyltransferase superfamily. RNA methyltransferase RlmE family.

It is found in the cytoplasm. It carries out the reaction uridine(2552) in 23S rRNA + S-adenosyl-L-methionine = 2'-O-methyluridine(2552) in 23S rRNA + S-adenosyl-L-homocysteine + H(+). Its function is as follows. Specifically methylates the uridine in position 2552 of 23S rRNA at the 2'-O position of the ribose in the fully assembled 50S ribosomal subunit. This is Ribosomal RNA large subunit methyltransferase E from Rhizobium etli (strain ATCC 51251 / DSM 11541 / JCM 21823 / NBRC 15573 / CFN 42).